Consider the following 485-residue polypeptide: ATP synthase subunit beta (485 aa).

Residues 1-20 form a disordered region; sequence MSTTKTTKMTVKTGSKGTSG. 170–177 provides a ligand contact to ATP; the sequence is GGAGVGKT.

It belongs to the ATPase alpha/beta chains family. As to quaternary structure, F-type ATPases have 2 components, CF(1) - the catalytic core - and CF(0) - the membrane proton channel. CF(1) has five subunits: alpha(3), beta(3), gamma(1), delta(1), epsilon(1). CF(0) has three main subunits: a(1), b(2) and c(9-12). The alpha and beta chains form an alternating ring which encloses part of the gamma chain. CF(1) is attached to CF(0) by a central stalk formed by the gamma and epsilon chains, while a peripheral stalk is formed by the delta and b chains.

It is found in the cell membrane. It carries out the reaction ATP + H2O + 4 H(+)(in) = ADP + phosphate + 5 H(+)(out). Its function is as follows. Produces ATP from ADP in the presence of a proton gradient across the membrane. The catalytic sites are hosted primarily by the beta subunits. The sequence is that of ATP synthase subunit beta from Mycobacterium leprae (strain TN).